The sequence spans 116 residues: MAVHFYDAAYDLEKALRNSDEYSRLRGLYDQVNADESAKRMFDNFRNVQLQLQQKQMSGEEITQEEVEQAQKTVALVQQHELISQLMEAEQRMSMLIGELNKIIMKPLEELYGSQQ.

Belongs to the UPF0342 family.

This chain is UPF0342 protein RBAM_010030, found in Bacillus velezensis (strain DSM 23117 / BGSC 10A6 / LMG 26770 / FZB42) (Bacillus amyloliquefaciens subsp. plantarum).